The chain runs to 147 residues: uncharacterized protein (147 aa).

Residues 71 to 91 (IDILAFVAGTVGVGSLVLLQF) form a helical membrane-spanning segment.

The protein resides in the virion. Its subcellular location is the host membrane. This is an uncharacterized protein from Acanthamoeba polyphaga mimivirus (APMV).